The primary structure comprises 411 residues: G1/S-specific cyclin pas1 (411 aa).

2 disordered regions span residues Leu210–Leu253 and Ser307–Tyr326. The segment covering Pro218–Val252 has biased composition (low complexity).

It belongs to the cyclin family.

Its function is as follows. Essential for the control of the cell cycle at the G1/S (start) transition. Interacts with the pef1 protein kinase. The pef1/pas1 complex activates the res2/cdc10 complex. The sequence is that of G1/S-specific cyclin pas1 (pas1) from Schizosaccharomyces pombe (strain 972 / ATCC 24843) (Fission yeast).